A 1097-amino-acid polypeptide reads, in one-letter code: U3 small nucleolar RNA-associated protein 22 (1097 aa).

2 stretches are compositionally biased toward basic and acidic residues: residues 1 to 10 and 18 to 27; these read MNGLKREHES and KTPETEYDSH. The interval 1-27 is disordered; the sequence is MNGLKREHESSSSQDGSKTPETEYDSH.

This sequence belongs to the NRAP family. As to quaternary structure, component of the ribosomal small subunit (SSU) processome.

Its subcellular location is the nucleus. The protein localises to the nucleolus. Its function is as follows. Involved in nucleolar processing of pre-18S ribosomal RNA and ribosome assembly. The chain is U3 small nucleolar RNA-associated protein 22 from Schizosaccharomyces pombe (strain 972 / ATCC 24843) (Fission yeast).